Consider the following 185-residue polypeptide: ATP-dependent protease subunit HslV (185 aa).

Thr12 is a catalytic residue. Positions 168, 171, and 174 each coordinate Na(+).

Belongs to the peptidase T1B family. HslV subfamily. A double ring-shaped homohexamer of HslV is capped on each side by a ring-shaped HslU homohexamer. The assembly of the HslU/HslV complex is dependent on binding of ATP.

It is found in the cytoplasm. The enzyme catalyses ATP-dependent cleavage of peptide bonds with broad specificity.. Allosterically activated by HslU binding. Its function is as follows. Protease subunit of a proteasome-like degradation complex believed to be a general protein degrading machinery. This Ruegeria pomeroyi (strain ATCC 700808 / DSM 15171 / DSS-3) (Silicibacter pomeroyi) protein is ATP-dependent protease subunit HslV.